The following is a 157-amino-acid chain: Small ribosomal subunit protein bS16 (157 aa).

Residues 125–141 (KRKAAKKAAEEAAAKEA) are compositionally biased toward basic and acidic residues. The segment at 125 to 157 (KRKAAKKAAEEAAAKEAEAEEAAEDKAEEESAE) is disordered. Acidic residues predominate over residues 142–157 (EAEEAAEDKAEEESAE).

This sequence belongs to the bacterial ribosomal protein bS16 family.

This is Small ribosomal subunit protein bS16 from Corynebacterium kroppenstedtii (strain DSM 44385 / JCM 11950 / CIP 105744 / CCUG 35717).